The following is a 216-amino-acid chain: Sugar fermentation stimulation protein homolog (216 aa).

This sequence belongs to the SfsA family.

This is Sugar fermentation stimulation protein homolog from Thermoplasma volcanium (strain ATCC 51530 / DSM 4299 / JCM 9571 / NBRC 15438 / GSS1).